Here is a 383-residue protein sequence, read N- to C-terminus: Na(+)/H(+) antiporter NhaA (383 aa).

11 consecutive transmembrane segments (helical) span residues 10-30 (LIGGLILFSAALLAIVVNNSP), 56-76 (LMHWINDGLMAIYFLYIGLEI), 91-111 (IITPAIAAFAGLAMPSLIYLS), 121-141 (GWAIPSATDIAFTLGILALLG), 150-170 (LLVITIAIFDDIAAIAIIAIF), 174-194 (SLSLLSLSLGTLFILAMIICN), 206-226 (VVLGFFAWFCTIKSGVHATLA), 254-274 (PWIIYFILPVFAFANAGISFS), 289-308 (IIWGLFVGKQLGIFSILAVF), 327-347 (GISLLCGIGFTMSLFIGVLAF), and 355-375 (AIKIGVVVGSVLSGFFGYIVL).

The protein belongs to the NhaA Na(+)/H(+) (TC 2.A.33) antiporter family.

The protein localises to the cell inner membrane. It carries out the reaction Na(+)(in) + 2 H(+)(out) = Na(+)(out) + 2 H(+)(in). In terms of biological role, na(+)/H(+) antiporter that extrudes sodium in exchange for external protons. The chain is Na(+)/H(+) antiporter NhaA from Francisella tularensis subsp. tularensis (strain SCHU S4 / Schu 4).